The sequence spans 839 residues: V-type proton ATPase 116 kDa subunit a 1 (839 aa).

Residues 1-395 (MGELFRSEEM…DAYGIGTYRE (395 aa)) are Cytoplasmic-facing. A phosphothreonine mark is found at T257 and T367. Y371 bears the Phosphotyrosine mark. A helical transmembrane segment spans residues 396–414 (INPAPYTVITFPFLFAVMF). Residues 415 to 416 (GD) are Vacuolar-facing. Residues 417–433 (FGHGILMTLFAVWMVLR) form a helical membrane-spanning segment. Residues 434–448 (ESRILSQKHENEMFS) are Cytoplasmic-facing. Residues 449–478 (MVFSGRYIILLMGLFSIYTGLIYNDCFSKS) traverse the membrane as a helical segment. The Vacuolar portion of the chain corresponds to 479 to 542 (LNIFGSSWSV…ATNKLTFLNS (64 aa)). A helical transmembrane segment spans residues 543-562 (FKMKMSVILGIIHMLFGVSL). Topologically, residues 563–580 (SLFNHIYFKKPLNIYFGF) are cytoplasmic. Residues 581–601 (IPEIIFMSSLFGYLVILIFYK) traverse the membrane as a helical segment. Residues 602–646 (WTAYDAHSSRNAPSLLIHFINMFLFSYPESGNAMLYSGQKGIQCF) are Vacuolar-facing. Residues 647 to 666 (LIVVAMLCVPWMLLFKPLIL) form a helical membrane-spanning segment. The Cytoplasmic portion of the chain corresponds to 667–726 (RHQYLRKKHLGTLNFGGIRVGNGPTEEDAEIIQHDQLSTHSEDAEEFDFGDTMVHQAIHT). A helical transmembrane segment spans residues 727 to 751 (IEYCLGCISNTASYLRLWALSLAHA). The Vacuolar segment spans residues 752 to 772 (QLSEVLWTMVIHIGLHVRSLA). Residues 773-811 (GGLGLFFIFAAFATLTVAILLIMEGLSAFLHALRLHWVE) form a helical membrane-spanning segment. The Cytoplasmic segment spans residues 812–839 (FQNKFYTGTGFKFLPFSFEHIREGKFDE).

Belongs to the V-ATPase 116 kDa subunit family. In terms of assembly, V-ATPase is a heteromultimeric enzyme made up of two complexes: the ATP-hydrolytic V1 complex and the proton translocation V0 complex. The V1 complex consists of three catalytic AB heterodimers that form a heterohexamer, three peripheral stalks each consisting of EG heterodimers, one central rotor including subunits D and F, and the regulatory subunits C and H. The proton translocation complex V0 consists of the proton transport subunit a, a ring of proteolipid subunits c9c'', rotary subunit d, subunits e and f, and the accessory subunits ATP6AP1/Ac45 and ATP6AP2/PRR. Interacts with SPAAR. As to expression, predominantly expressed in neurons in the cortex and in the dentate gyrus, CA1 and CA3 regions of the hippocampus (at protein level). Expressed at lower levels in astrocytes, oligodendrocytes and microglia (at protein level). In the cerebellum, present in Purkinje and granule cells (at protein level).

It localises to the cytoplasmic vesicle. The protein resides in the clathrin-coated vesicle membrane. The protein localises to the secretory vesicle. It is found in the synaptic vesicle membrane. Its subcellular location is the melanosome. Subunit of the V0 complex of vacuolar(H+)-ATPase (V-ATPase), a multisubunit enzyme composed of a peripheral complex (V1) that hydrolyzes ATP and a membrane integral complex (V0) that translocates protons. V-ATPase is responsible for the acidification of various organelles, such as lysosomes, endosomes, the trans-Golgi network, and secretory granules, including synaptic vesicles. In certain cell types, can be exported to the plasma membrane, where it is involved in the acidification of the extracellular environment. Required for assembly and activity of the vacuolar ATPase. Through its action on compartment acidification, plays an essential role in neuronal development in terms of integrity and connectivity of neurons. In Mus musculus (Mouse), this protein is V-type proton ATPase 116 kDa subunit a 1 (Atp6v0a1).